The sequence spans 336 residues: Biotin synthase (336 aa).

One can recognise a Radical SAM core domain in the interval 36–263 (TKVQISTLLS…ESHVRLAAGR (228 aa)). Cys51, Cys55, and Cys58 together coordinate [4Fe-4S] cluster. Positions 95, 126, 186, and 258 each coordinate [2Fe-2S] cluster.

It belongs to the radical SAM superfamily. Biotin synthase family. As to quaternary structure, homodimer. The cofactor is [4Fe-4S] cluster. Requires [2Fe-2S] cluster as cofactor.

It carries out the reaction (4R,5S)-dethiobiotin + (sulfur carrier)-SH + 2 reduced [2Fe-2S]-[ferredoxin] + 2 S-adenosyl-L-methionine = (sulfur carrier)-H + biotin + 2 5'-deoxyadenosine + 2 L-methionine + 2 oxidized [2Fe-2S]-[ferredoxin]. It functions in the pathway cofactor biosynthesis; biotin biosynthesis; biotin from 7,8-diaminononanoate: step 2/2. In terms of biological role, catalyzes the conversion of dethiobiotin (DTB) to biotin by the insertion of a sulfur atom into dethiobiotin via a radical-based mechanism. In Gluconobacter oxydans (strain 621H) (Gluconobacter suboxydans), this protein is Biotin synthase.